The chain runs to 189 residues: Apolipoprotein D (189 aa).

The first 20 residues, 1 to 20 (MVTMLMFLATLAGLFTTAKG), serve as a signal peptide directing secretion. At Gln21 the chain carries Pyrrolidone carboxylic acid. 2 cysteine pairs are disulfide-bonded: Cys28-Cys134 and Cys61-Cys185. Residues Asn65 and Asn98 are each glycosylated (N-linked (GlcNAc...) asparagine).

It belongs to the calycin superfamily. Lipocalin family. Homodimer. Highest levels of expression in brain, testis, virgin mammary gland and salivary gland. Moderate levels in skeletal muscle, lactating mammary gland and thymus. Low levels in lung and lymph node. No expression in kidney, pancreas, liver or spleen.

It is found in the secreted. Its function is as follows. APOD occurs in the macromolecular complex with lecithin-transport and binding of bilin. Appears to be able to transport a variety of ligands in a number of different contexts. The sequence is that of Apolipoprotein D (Apod) from Mus musculus (Mouse).